The chain runs to 429 residues: Serine hydroxymethyltransferase (429 aa).

(6S)-5,6,7,8-tetrahydrofolate contacts are provided by residues Leu126 and 130–132; that span reads GHL. An N6-(pyridoxal phosphate)lysine modification is found at Lys235. A (6S)-5,6,7,8-tetrahydrofolate-binding site is contributed by 359–361; that stretch reads SPF.

Belongs to the SHMT family. Homodimer. The cofactor is pyridoxal 5'-phosphate.

The protein resides in the cytoplasm. It catalyses the reaction (6R)-5,10-methylene-5,6,7,8-tetrahydrofolate + glycine + H2O = (6S)-5,6,7,8-tetrahydrofolate + L-serine. The protein operates within one-carbon metabolism; tetrahydrofolate interconversion. Its pathway is amino-acid biosynthesis; glycine biosynthesis; glycine from L-serine: step 1/1. In terms of biological role, catalyzes the reversible interconversion of serine and glycine with tetrahydrofolate (THF) serving as the one-carbon carrier. This reaction serves as the major source of one-carbon groups required for the biosynthesis of purines, thymidylate, methionine, and other important biomolecules. Also exhibits THF-independent aldolase activity toward beta-hydroxyamino acids, producing glycine and aldehydes, via a retro-aldol mechanism. The chain is Serine hydroxymethyltransferase from Synechococcus sp. (strain CC9311).